We begin with the raw amino-acid sequence, 796 residues long: Protein translocase subunit SecA 2 (796 aa).

ATP-binding positions include Gln84, 102–106 (GEGKT), and Asp496.

This sequence belongs to the SecA family. As to quaternary structure, monomer and homodimer. Part of the essential Sec protein translocation apparatus which comprises SecA, SecYEG and auxiliary proteins SecDF. Other proteins may also be involved.

The protein resides in the cell membrane. It is found in the cytoplasm. The catalysed reaction is ATP + H2O + cellular proteinSide 1 = ADP + phosphate + cellular proteinSide 2.. Functionally, part of the Sec protein translocase complex. Interacts with the SecYEG preprotein conducting channel. Has a central role in coupling the hydrolysis of ATP to the transfer of proteins into and across the cell membrane, serving as an ATP-driven molecular motor driving the stepwise translocation of polypeptide chains across the membrane. The chain is Protein translocase subunit SecA 2 from Staphylococcus haemolyticus (strain JCSC1435).